The following is a 158-amino-acid chain: MAEQATKSVLFVCLGNICRSPIAEAVFRKLVTDQNISENWRVDSAATSGYEIGNPPDYRGQSCMKRHGIPMSHVARQITKEDFATFDYILCMDESNLRDLNRKSNQVKTCKAKIELLGSYDPQKQLIIEDPYYGNDSDFETVYQQCVRCCRAFLEKAH.

Ala-2 carries the N-acetylalanine modification. The active-site Nucleophile is the Cys-13. The active site involves Arg-19. Catalysis depends on Asp-130, which acts as the Proton donor. Phosphotyrosine occurs at positions 132 and 133.

The protein belongs to the low molecular weight phosphotyrosine protein phosphatase family. Interacts with EPHA2; dephosphorylates EPHA2. Interacts with EPHB1. As to quaternary structure, interacts with the SH3 domain of SPTAN1. There is no interaction observed for isoforms 2 or 3. Post-translationally, phosphorylated by LCK. Phosphorylation at Tyr-132 increases its phosphatase activity. In terms of processing, not phosphorylated. As to expression, expressed in T-lymphocytes.

Its subcellular location is the cytoplasm. It catalyses the reaction O-phospho-L-tyrosyl-[protein] + H2O = L-tyrosyl-[protein] + phosphate. The enzyme catalyses a phosphate monoester + H2O = an alcohol + phosphate. Its activity is regulated as follows. Inhibited by sulfhydryl reagents. Its function is as follows. Acts on tyrosine phosphorylated proteins, low-MW aryl phosphates and natural and synthetic acyl phosphates with differences in substrate specificity between isoform 1 and isoform 2. In terms of biological role, does not possess phosphatase activity. This chain is Low molecular weight phosphotyrosine protein phosphatase, found in Homo sapiens (Human).